We begin with the raw amino-acid sequence, 533 residues long: Ribonuclease III domain-containing protein RNC1, chloroplastic (533 aa).

Residues 1 to 30 (MAPPAMAFQALALGPLPLPLPAARRRRRVR) constitute a chloroplast transit peptide. Disordered stretches follow at residues 31-57 (VLAVAADHTPPPPPSPSSPPEPANSPS) and 66-85 (RKKAVSPKKKHPPRRFILKP). Over residues 39–53 (TPPPPPSPSSPPEPA) the composition is skewed to pro residues. Basic residues predominate over residues 69–82 (AVSPKKKHPPRRFI). RNase III domains lie at 164–279 (LLYL…LCFG) and 411–511 (EHPR…CVYG).

As to quaternary structure, interacts with RNA. Part of large ribonucleo-protein particles that contain CAF1 and/or CAF2.

It is found in the plastid. The protein resides in the chloroplast. In terms of biological role, binds specific group II introns in chloroplasts and facilitates their splicing. Acts on both subgroup IIA and subgroup IIB introns. The substrates of the subgroup II also require the CRM domain proteins CAF1 or CAF2. Binds both single-stranded and double-stranded RNA non-specifically, but lacks endonuclease activity. Required for plastid ribosome biogenesis. The chain is Ribonuclease III domain-containing protein RNC1, chloroplastic from Oryza sativa subsp. japonica (Rice).